The chain runs to 354 residues: Allantoicase (354 aa).

The protein belongs to the allantoicase family.

The enzyme catalyses allantoate + H2O = (S)-ureidoglycolate + urea. It functions in the pathway nitrogen metabolism; (S)-allantoin degradation; (S)-ureidoglycolate from allantoate (aminidohydrolase route): step 1/1. In terms of biological role, utilization of purines as secondary nitrogen sources, when primary sources are limiting. The protein is Allantoicase (alc-1) of Neurospora crassa (strain ATCC 24698 / 74-OR23-1A / CBS 708.71 / DSM 1257 / FGSC 987).